Here is a 600-residue protein sequence, read N- to C-terminus: Aspartate--tRNA(Asp/Asn) ligase (600 aa).

E175 contacts L-aspartate. Residues 199–202 (QLFK) are aspartate. R221 contributes to the L-aspartate binding site. ATP is bound by residues 221 to 223 (RDE) and Q230. H453 contributes to the L-aspartate binding site. E487 serves as a coordination point for ATP. L-aspartate is bound at residue R494. 539 to 542 (GWDR) contacts ATP. Residues 578 to 600 (AAQRKESGIDFKPKKGPQGQKEK) form a disordered region. A compositionally biased stretch (basic and acidic residues) spans 580-590 (QRKESGIDFKP).

It belongs to the class-II aminoacyl-tRNA synthetase family. Type 1 subfamily. Homodimer.

Its subcellular location is the cytoplasm. The enzyme catalyses tRNA(Asx) + L-aspartate + ATP = L-aspartyl-tRNA(Asx) + AMP + diphosphate. In terms of biological role, aspartyl-tRNA synthetase with relaxed tRNA specificity since it is able to aspartylate not only its cognate tRNA(Asp) but also tRNA(Asn). Reaction proceeds in two steps: L-aspartate is first activated by ATP to form Asp-AMP and then transferred to the acceptor end of tRNA(Asp/Asn). The protein is Aspartate--tRNA(Asp/Asn) ligase of Corynebacterium jeikeium (strain K411).